A 492-amino-acid polypeptide reads, in one-letter code: Glutamyl-tRNA(Gln) amidotransferase subunit A (492 aa).

Residues K78 and S158 each act as charge relay system in the active site. Catalysis depends on S182, which acts as the Acyl-ester intermediate.

The protein belongs to the amidase family. GatA subfamily. As to quaternary structure, heterotrimer of A, B and C subunits.

It carries out the reaction L-glutamyl-tRNA(Gln) + L-glutamine + ATP + H2O = L-glutaminyl-tRNA(Gln) + L-glutamate + ADP + phosphate + H(+). Its function is as follows. Allows the formation of correctly charged Gln-tRNA(Gln) through the transamidation of misacylated Glu-tRNA(Gln) in organisms which lack glutaminyl-tRNA synthetase. The reaction takes place in the presence of glutamine and ATP through an activated gamma-phospho-Glu-tRNA(Gln). The polypeptide is Glutamyl-tRNA(Gln) amidotransferase subunit A (Orientia tsutsugamushi (strain Ikeda) (Rickettsia tsutsugamushi)).